The following is a 304-amino-acid chain: Ubiquitin thioesterase OTU1 (304 aa).

The interval 5–83 (RCKTREGTQL…IVEEDKSKLR (79 aa)) is UBX-like. The OTU domain occupies 105-230 (IVRRVVPADN…GIHYDPLQRQ (126 aa)). Residues 110–116 (VPADNSC) are cys-loop. Residue aspartate 113 is part of the active site. Cysteine 116 serves as the catalytic Nucleophile. The variable-loop stretch occupies residues 169 to 179 (IRREDTWGGAI). A his-loop region spans residues 219 to 223 (YDGIH). Isoleucine 222 contributes to the substrate binding site. The active site involves histidine 223. An S2 site region spans residues 247-252 (DEALVQ). The C2H2-type zinc finger occupies 274–298 (LRCMACQKGLTGQSAARDHAKETGH). Residue histidine 298 is part of the active site.

It is found in the cytoplasm. It carries out the reaction Thiol-dependent hydrolysis of ester, thioester, amide, peptide and isopeptide bonds formed by the C-terminal Gly of ubiquitin (a 76-residue protein attached to proteins as an intracellular targeting signal).. In terms of biological role, hydrolase that can remove conjugated ubiquitin from proteins and participates in endoplasmic reticulum-associated degradation (ERAD) for misfolded lumenal proteins. May act by triming the ubiquitin chain on the associated substrate to facilitate their threading through the VCP/p97 pore. Ubiquitin moieties on substrates may present a steric impediment to the threading process when the substrate is transferred to the VCP pore and threaded through VCP's axial channel. Mediates deubiquitination of 'Lys-27'-, 'Lys-29'- and 'Lys-33'-linked polyubiquitin chains. Also able to hydrolyze 'Lys-11'-linked ubiquitin chains. Cleaves both polyubiquitin and di-ubiquitin. The sequence is that of Ubiquitin thioesterase OTU1 (yod1) from Xenopus laevis (African clawed frog).